The following is a 134-amino-acid chain: S-protein homolog 18 (134 aa).

An N-terminal signal peptide occupies residues 1 to 25 (MCPSSFRLILSVILIAFLFVGLCEA). An N-linked (GlcNAc...) asparagine glycan is attached at Asn-87.

It belongs to the plant self-incompatibility (S1) protein family.

The protein localises to the secreted. This Arabidopsis thaliana (Mouse-ear cress) protein is S-protein homolog 18.